The primary structure comprises 173 residues: Ribosome maturation factor RimM (173 aa).

The region spanning 92-165 (EDEYYHTDLI…RVVVALPQEI (74 aa)) is the PRC barrel domain.

The protein belongs to the RimM family. In terms of assembly, binds ribosomal protein uS19.

It localises to the cytoplasm. Its function is as follows. An accessory protein needed during the final step in the assembly of 30S ribosomal subunit, possibly for assembly of the head region. Essential for efficient processing of 16S rRNA. May be needed both before and after RbfA during the maturation of 16S rRNA. It has affinity for free ribosomal 30S subunits but not for 70S ribosomes. The sequence is that of Ribosome maturation factor RimM from Bradyrhizobium diazoefficiens (strain JCM 10833 / BCRC 13528 / IAM 13628 / NBRC 14792 / USDA 110).